Here is a 200-residue protein sequence, read N- to C-terminus: Large ribosomal subunit protein uL4 (200 aa).

Residues 38-68 (GRQGSKQQKTRSDVRGGGKRPWRQKGTGRAR) form a disordered region. Residues 54 to 65 (GGKRPWRQKGTG) are compositionally biased toward basic residues.

Belongs to the universal ribosomal protein uL4 family. Part of the 50S ribosomal subunit.

Its function is as follows. One of the primary rRNA binding proteins, this protein initially binds near the 5'-end of the 23S rRNA. It is important during the early stages of 50S assembly. It makes multiple contacts with different domains of the 23S rRNA in the assembled 50S subunit and ribosome. Forms part of the polypeptide exit tunnel. The sequence is that of Large ribosomal subunit protein uL4 from Pseudomonas syringae pv. tomato (strain ATCC BAA-871 / DC3000).